A 695-amino-acid polypeptide reads, in one-letter code: Elongation factor G 1 (695 aa).

Residues 6–281 enclose the tr-type G domain; that stretch reads TRYRNIGIFA…AVVDYLPNPK (276 aa). GTP is bound by residues 15-22, 79-83, and 133-136; these read AHVDAGKT, DTPGH, and NKLD.

Belongs to the TRAFAC class translation factor GTPase superfamily. Classic translation factor GTPase family. EF-G/EF-2 subfamily.

It is found in the cytoplasm. Catalyzes the GTP-dependent ribosomal translocation step during translation elongation. During this step, the ribosome changes from the pre-translocational (PRE) to the post-translocational (POST) state as the newly formed A-site-bound peptidyl-tRNA and P-site-bound deacylated tRNA move to the P and E sites, respectively. Catalyzes the coordinated movement of the two tRNA molecules, the mRNA and conformational changes in the ribosome. The polypeptide is Elongation factor G 1 (fusA) (Synechocystis sp. (strain ATCC 27184 / PCC 6803 / Kazusa)).